The sequence spans 217 residues: D-methionine transport system permease protein MetI (217 aa).

An ABC transmembrane type-1 domain is found at 13-204 (VWETLMMTFV…LLVILVYLIQ (192 aa)). Helical transmembrane passes span 20–40 (TFVSGFFGFVLGLPVGVLLYV), 58–78 (GVVNIFRSIPFIILLVWMIPF), 81–101 (MIVGTSIGLQAAIVPLTVGAA), 152–172 (ITLITLVGYSAMGGAVGAGGL), and 186–206 (ATVMNTVLVLLVILVYLIQLS).

It belongs to the binding-protein-dependent transport system permease family. CysTW subfamily.

It localises to the cell inner membrane. Functionally, part of the binding-protein-dependent transport system for D-methionine and the toxic methionine analog alpha-methyl-methionine. Probably responsible for the translocation of the substrate across the membrane. This Yersinia pestis protein is D-methionine transport system permease protein MetI (metI).